A 325-amino-acid chain; its full sequence is 2-dehydro-3-deoxygluconokinase (325 aa).

Substrate-binding positions include 49 to 53 (GSEAN), Tyr105, 121 to 123 (YYR), and Arg181. ATP is bound by residues 179–181 (NIR), 240–245 (KLGAEG), and 269–272 (GAGD). The substrate site is built by Asp272 and Asp308. Asp272 (proton acceptor) is an active-site residue.

The protein belongs to the carbohydrate kinase PfkB family. As to quaternary structure, homohexamer; trimer of dimers.

It catalyses the reaction 2-dehydro-3-deoxy-D-gluconate + ATP = 2-dehydro-3-deoxy-6-phospho-D-gluconate + ADP + H(+). It functions in the pathway carbohydrate acid metabolism; 2-dehydro-3-deoxy-D-gluconate degradation; D-glyceraldehyde 3-phosphate and pyruvate from 2-dehydro-3-deoxy-D-gluconate: step 1/2. Its function is as follows. Involved in the degradation of glucose via the semi-phosphorylative Entner-Doudoroff pathway. Catalyzes the phosphorylation of 2-keto-3-deoxygluconate (KDG) yielding 2-keto-3-deoxy-6-phosphogluconate (KDPG). The polypeptide is 2-dehydro-3-deoxygluconokinase (kdgK) (Thermoproteus tenax).